The primary structure comprises 502 residues: Lysine--tRNA ligase (502 aa).

Positions 412 and 419 each coordinate Mg(2+).

The protein belongs to the class-II aminoacyl-tRNA synthetase family. As to quaternary structure, homodimer. Requires Mg(2+) as cofactor.

The protein localises to the cytoplasm. It carries out the reaction tRNA(Lys) + L-lysine + ATP = L-lysyl-tRNA(Lys) + AMP + diphosphate. The polypeptide is Lysine--tRNA ligase (Histophilus somni (strain 2336) (Haemophilus somnus)).